The chain runs to 446 residues: Glycerol-3-phosphate acyltransferase 3 (446 aa).

3 helical membrane passes run 25 to 45, 142 to 162, and 164 to 184; these read LPSA…VLVK, LRLT…LLPL, and FTLA…VGQL. The HXXXXD motif motif lies at 232 to 237; the sequence is HTSPID. Residues 352–372 traverse the membrane as a helical segment; sequence IVSYLLRIMTSWAIVCHVWYM. The segment at 418–446 is disordered; sequence FKEEQQKNYSKMLVRNGSQGNLPAGTESD.

The protein belongs to the 1-acyl-sn-glycerol-3-phosphate acyltransferase family.

It localises to the endoplasmic reticulum membrane. The catalysed reaction is sn-glycerol 3-phosphate + an acyl-CoA = a 1-acyl-sn-glycero-3-phosphate + CoA. The enzyme catalyses a 1-acyl-sn-glycero-3-phosphate + an acyl-CoA = a 1,2-diacyl-sn-glycero-3-phosphate + CoA. It carries out the reaction dodecanoyl-CoA + sn-glycerol 3-phosphate = 1-dodecanoyl-sn-glycerol 3-phosphate + CoA. It catalyses the reaction sn-glycerol 3-phosphate + hexadecanoyl-CoA = 1-hexadecanoyl-sn-glycero-3-phosphate + CoA. The catalysed reaction is sn-glycerol 3-phosphate + (9Z)-octadecenoyl-CoA = 1-(9Z-octadecenoyl)-sn-glycero-3-phosphate + CoA. The enzyme catalyses (9Z,12Z)-octadecadienoyl-CoA + sn-glycerol 3-phosphate = 1-(9Z,12Z)-octadecadienoyl-sn-glycero-3-phosphate + CoA. It carries out the reaction 1-tetradecanoyl-sn-glycerol 3-phosphate + (9Z)-octadecenoyl-CoA = 1-tetradecanoyl-2-(9Z)-octadecenoyl-sn-glycero-3-phosphate + CoA. It catalyses the reaction 1-hexadecanoyl-sn-glycero-3-phosphate + (9Z)-octadecenoyl-CoA = 1-hexadecanoyl-2-(9Z-octadecenoyl)-sn-glycero-3-phosphate + CoA. The catalysed reaction is 1-(9Z-octadecenoyl)-sn-glycero-3-phosphate + (9Z)-octadecenoyl-CoA = 1,2-di-(9Z-octadecenoyl)-sn-glycero-3-phosphate + CoA. The enzyme catalyses 1-(6Z,9Z,12Z-octadecatrienoyl)-sn-glycero-3-phosphate + (9Z)-octadecenoyl-CoA = (6Z,9Z,12Z)-octadecatrienoyl-2-(9Z)-octadecenoyl-sn-glycero-3-phosphate + CoA. It carries out the reaction 1-(9Z,12Z,15Z)-octadecatrienoyl-sn-glycero-3-phosphate + (9Z)-octadecenoyl-CoA = 1-(9Z,12Z,15Z)-octadecatrienoyl-2-(9Z)-octadecenoyl-sn-glycero-3-phosphate + CoA. It catalyses the reaction 1-(9Z-octadecenoyl)-sn-glycero-3-phosphate + tetradecanoyl-CoA = 1-(9Z)-octadecenoyl-2-tetradecanoyl-sn-glycero-3-phosphate + CoA. The catalysed reaction is 1-(9Z-octadecenoyl)-sn-glycero-3-phosphate + hexadecanoyl-CoA = 1-(9Z)-octadecenoyl-2-hexadecanoyl-sn-glycero-3-phosphate + CoA. The enzyme catalyses 1-(9Z-octadecenoyl)-sn-glycero-3-phosphate + octadecanoyl-CoA = 1-(9Z-octadecenoyl)-2-octadecanoyl-sn-glycero-3-phosphate + CoA. It carries out the reaction 1-(9Z-octadecenoyl)-sn-glycero-3-phosphate + (9Z,12Z)-octadecadienoyl-CoA = 1-(9Z)-octadecenoyl-2-(9Z,12Z)-octadecadienoyl-sn-glycero-3-phosphate + CoA. It catalyses the reaction 1-(5Z,8Z,11Z,14Z-eicosatetraenoyl)-sn-glycero-3-phosphate + (9Z)-octadecenoyl-CoA = 1-(5Z,8Z,11Z,14Z)-eicosatetraenoyl-2-(9Z)-octadecenoyl-sn-glycero-3-phosphate + CoA. It functions in the pathway glycerolipid metabolism; triacylglycerol biosynthesis. It participates in phospholipid metabolism; CDP-diacylglycerol biosynthesis; CDP-diacylglycerol from sn-glycerol 3-phosphate: step 1/3. In terms of biological role, converts glycerol-3-phosphate to 1-acyl-sn-glycerol-3-phosphate (lysophosphatidic acid or LPA) by incorporating an acyl moiety at the sn-1 position of the glycerol backbone. Also converts LPA into 1,2-diacyl-sn-glycerol-3-phosphate (phosphatidic acid or PA) by incorporating an acyl moiety at the sn-2 position of the glycerol backbone. Protects cells against lipotoxicity. This chain is Glycerol-3-phosphate acyltransferase 3, found in Gallus gallus (Chicken).